Reading from the N-terminus, the 129-residue chain is Fluoride-specific ion channel FluC 2 (129 aa).

Transmembrane regions (helical) follow at residues 4–24, 39–59, 65–85, and 104–124; these read LDVM…WWIG, TFLI…LFGV, YGTM…TTFS, and VFYL…GAML. The Na(+) site is built by glycine 79 and threonine 82.

Belongs to the fluoride channel Fluc/FEX (TC 1.A.43) family.

The protein localises to the cell inner membrane. The catalysed reaction is fluoride(in) = fluoride(out). With respect to regulation, na(+) is not transported, but it plays an essential structural role and its presence is essential for fluoride channel function. In terms of biological role, fluoride-specific ion channel. Important for reducing fluoride concentration in the cell, thus reducing its toxicity. The sequence is that of Fluoride-specific ion channel FluC 2 from Brucella abortus biovar 1 (strain 9-941).